Consider the following 53-residue polypeptide: Small ribosomal subunit protein uS14 (53 aa).

Residues C17, C20, C36, and C39 each coordinate Zn(2+).

The protein belongs to the universal ribosomal protein uS14 family. Zinc-binding uS14 subfamily. As to quaternary structure, part of the 30S ribosomal subunit. Zn(2+) is required as a cofactor.

Binds 16S rRNA, required for the assembly of 30S particles. The protein is Small ribosomal subunit protein uS14 of Methanocaldococcus jannaschii (strain ATCC 43067 / DSM 2661 / JAL-1 / JCM 10045 / NBRC 100440) (Methanococcus jannaschii).